We begin with the raw amino-acid sequence, 235 residues long: Large ribosomal subunit protein uL1 (235 aa).

The protein belongs to the universal ribosomal protein uL1 family. As to quaternary structure, part of the 50S ribosomal subunit.

Its function is as follows. Binds directly to 23S rRNA. The L1 stalk is quite mobile in the ribosome, and is involved in E site tRNA release. Functionally, protein L1 is also a translational repressor protein, it controls the translation of the L11 operon by binding to its mRNA. In Desulfovibrio desulfuricans (strain ATCC 27774 / DSM 6949 / MB), this protein is Large ribosomal subunit protein uL1.